Reading from the N-terminus, the 142-residue chain is Hemoglobin subunit alpha (142 aa).

A Globin domain is found at 2–142 (VLSPADKSNV…VSTVLTSKYR (141 aa)). Ser-4 bears the Phosphoserine mark. N6-succinyllysine is present on residues Lys-8 and Lys-12. Lys-17 carries the post-translational modification N6-acetyllysine; alternate. An N6-succinyllysine; alternate modification is found at Lys-17. Tyr-25 is subject to Phosphotyrosine. Phosphoserine is present on Ser-36. An N6-succinyllysine modification is found at Lys-41. Position 50 is a phosphoserine (Ser-50). Residue His-59 coordinates O2. His-88 provides a ligand contact to heme b. Ser-103 carries the phosphoserine modification. Thr-109 bears the Phosphothreonine mark. Ser-125 and Ser-132 each carry phosphoserine. Phosphothreonine is present on residues Thr-135 and Thr-138. The residue at position 139 (Ser-139) is a Phosphoserine.

It belongs to the globin family. As to quaternary structure, heterotetramer of two alpha chains and two beta chains. In terms of tissue distribution, red blood cells.

In terms of biological role, involved in oxygen transport from the lung to the various peripheral tissues. Functionally, hemopressin acts as an antagonist peptide of the cannabinoid receptor CNR1. Hemopressin-binding efficiently blocks cannabinoid receptor CNR1 and subsequent signaling. This Ateles geoffroyi (Black-handed spider monkey) protein is Hemoglobin subunit alpha (HBA).